We begin with the raw amino-acid sequence, 227 residues long: Ribonuclease 3 (227 aa).

The 123-residue stretch at 4 to 126 folds into the RNase III domain; the sequence is LDRLERKIGY…IIGAMSLDQG (123 aa). E39 is a Mg(2+) binding site. Residue D43 is part of the active site. D112 and E115 together coordinate Mg(2+). E115 is a catalytic residue. Residues 153 to 226 enclose the DRBM domain; that stretch reads DAKTRLQEYL…AEQILKELDI (74 aa).

It belongs to the ribonuclease III family. As to quaternary structure, homodimer. Mg(2+) serves as cofactor.

Its subcellular location is the cytoplasm. The catalysed reaction is Endonucleolytic cleavage to 5'-phosphomonoester.. Digests double-stranded RNA. Involved in the processing of primary rRNA transcript to yield the immediate precursors to the large and small rRNAs (23S and 16S). Processes some mRNAs, and tRNAs when they are encoded in the rRNA operon. Processes pre-crRNA and tracrRNA of type II CRISPR loci if present in the organism. This Haemophilus influenzae (strain PittGG) protein is Ribonuclease 3.